Consider the following 545-residue polypeptide: Probable sucrose-6-phosphate hydrolase (545 aa).

Substrate-binding positions include leucine 107–aspartate 110, glutamine 126, phenylalanine 169–serine 170, arginine 230–aspartate 231, and glutamate 285. Aspartate 110 is an active-site residue.

Belongs to the glycosyl hydrolase 32 family.

The protein resides in the cytoplasm. The enzyme catalyses Hydrolysis of terminal non-reducing beta-D-fructofuranoside residues in beta-D-fructofuranosides.. It participates in glycan biosynthesis; sucrose metabolism. Enables the bacterium to metabolize sucrose as a sole carbon source. This is Probable sucrose-6-phosphate hydrolase from Psychromonas ingrahamii (strain DSM 17664 / CCUG 51855 / 37).